A 682-amino-acid chain; its full sequence is 1,4-alpha-glucan-branching enzyme (682 aa).

2 residues coordinate (1,4-alpha-D-glucosyl)n: Trp-88 and Lys-124. The active-site Nucleophile is Asp-342. The active-site Proton donor is Glu-397.

Belongs to the glycosyl hydrolase 13 family. GlgB subfamily.

The protein resides in the cytoplasm. The enzyme catalyses Transfers a segment of a (1-&gt;4)-alpha-D-glucan chain to a primary hydroxy group in a similar glucan chain.. It functions in the pathway glycan biosynthesis; glycogen biosynthesis. Glycogen-branching enzyme participates in the glycogen biosynthetic process along with glycogenin and glycogen synthase. Generates alpha-1,6-glucosidic branches from alpha-1,4-linked glucose chains, to increase solubility of the glycogen polymer. The polypeptide is 1,4-alpha-glucan-branching enzyme (Cryptococcus neoformans var. grubii serotype A (strain H99 / ATCC 208821 / CBS 10515 / FGSC 9487) (Filobasidiella neoformans var. grubii)).